The following is a 1291-amino-acid chain: DNA-directed RNA polymerase subunit beta' (1291 aa).

Residues cysteine 60, cysteine 62, cysteine 75, and cysteine 78 each contribute to the Zn(2+) site. Mg(2+) is bound by residues aspartate 535, aspartate 537, and aspartate 539. Residues cysteine 874, cysteine 951, cysteine 958, and cysteine 961 each contribute to the Zn(2+) site.

This sequence belongs to the RNA polymerase beta' chain family. The RNAP catalytic core consists of 2 alpha, 1 beta, 1 beta' and 1 omega subunit. When a sigma factor is associated with the core the holoenzyme is formed, which can initiate transcription. It depends on Mg(2+) as a cofactor. Requires Zn(2+) as cofactor.

It carries out the reaction RNA(n) + a ribonucleoside 5'-triphosphate = RNA(n+1) + diphosphate. In terms of biological role, DNA-dependent RNA polymerase catalyzes the transcription of DNA into RNA using the four ribonucleoside triphosphates as substrates. In Leifsonia xyli subsp. xyli (strain CTCB07), this protein is DNA-directed RNA polymerase subunit beta'.